We begin with the raw amino-acid sequence, 340 residues long: Glyceraldehyde-3-phosphate dehydrogenase, cytosolic (340 aa).

NAD(+) is bound by residues 16-17, Asp-38, and Arg-85; that span reads RI. D-glyceraldehyde 3-phosphate contacts are provided by residues 156 to 158, Thr-187, 216 to 217, and Arg-239; these read SCT and TG. Cys-157 (nucleophile) is an active-site residue. Asn-321 serves as a coordination point for NAD(+).

This sequence belongs to the glyceraldehyde-3-phosphate dehydrogenase family. As to quaternary structure, homotetramer.

Its subcellular location is the cytoplasm. The enzyme catalyses D-glyceraldehyde 3-phosphate + phosphate + NAD(+) = (2R)-3-phospho-glyceroyl phosphate + NADH + H(+). Its pathway is carbohydrate degradation; glycolysis; pyruvate from D-glyceraldehyde 3-phosphate: step 1/5. Functionally, key enzyme in glycolysis that catalyzes the first step of the pathway by converting D-glyceraldehyde 3-phosphate (G3P) into 3-phospho-D-glyceroyl phosphate. Essential for the maintenance of cellular ATP levels and carbohydrate metabolism. This is Glyceraldehyde-3-phosphate dehydrogenase, cytosolic from Ginkgo biloba (Ginkgo).